Here is a 701-residue protein sequence, read N- to C-terminus: Pentatricopeptide repeat-containing protein At5g50390, chloroplastic (701 aa).

The N-terminal 47 residues, Met-1–Ser-47, are a transit peptide targeting the chloroplast. PPR repeat units lie at residues Ser-86 to Arg-116, Gly-122 to Pro-156, Glu-157 to Arg-187, Asn-188 to Glu-218, Glu-223 to Asp-257, Asn-258 to Lys-288, Thr-289 to Ile-323, Asp-324 to Ser-358, Glu-359 to Lys-389, Asn-390 to Pro-424, Asn-425 to Pro-460, and Arg-461 to Lys-491. Residues Met-496–Gly-571 are type E motif. Residues Asp-572–Ser-606 are type E(+) motif; degenerate. Positions Glu-607–Trp-701 are type DYW motif.

The protein belongs to the PPR family. PCMP-H subfamily.

Its subcellular location is the plastid. The protein localises to the chloroplast. This is Pentatricopeptide repeat-containing protein At5g50390, chloroplastic (PCMP-H58) from Arabidopsis thaliana (Mouse-ear cress).